Reading from the N-terminus, the 217-residue chain is uncharacterized protein (217 aa).

Residues Met1–Gly24 form the signal peptide.

This is an uncharacterized protein from Aedes vexans (Inland floodwater mosquito).